A 420-amino-acid chain; its full sequence is Proteinase-activated receptor 1 (420 aa).

Residues 1 to 20 (MMELRVLLLLLLLTLLGAMG) form the signal peptide. Residues 21–42 (SLCLANSDTQAKGAHSNNMTIK) constitute a propeptide, removed for receptor activation. The N-linked (GlcNAc...) asparagine glycan is linked to asparagine 38. Over 43–101 (TFRIFDDSESEFEEIPWDELDESGEGSGDQAPVSRSARKPIRRNITKEAEQYLSSQWLT) the chain is Extracellular. The interval 61 to 80 (ELDESGEGSGDQAPVSRSAR) is disordered. Asparagine 86 carries N-linked (GlcNAc...) asparagine glycosylation. A helical transmembrane segment spans residues 102–127 (KFVPSLYTVVFIVGLPLNLLAIIIFL). At 128–136 (FKMKVRKPA) the chain is on the cytoplasmic side. Residues 137 to 156 (VVYMLNLAIADVFFVSVLPF) traverse the membrane as a helical segment. Residues 157 to 175 (KIAYHLSGNDWLFGPGMCR) lie on the Extracellular side of the membrane. The cysteines at positions 174 and 253 are disulfide-linked. The chain crosses the membrane as a helical span at residues 176 to 197 (IVTAIFYCNMYCSVLLIASISV). Over 198 to 217 (DRFLAVVYPMHSLSWRTMSR) the chain is Cytoplasmic. The chain crosses the membrane as a helical span at residues 218 to 238 (AYMACSFIWLISIASTIPLLV). Residues 239–267 (TEQTQKIPRLDITTCHDVLDLKDLKDFYI) lie on the Extracellular side of the membrane. A helical membrane pass occupies residues 268–287 (YYFSSFCLLFFFVPFIITTI). The Cytoplasmic segment spans residues 288–310 (CYIGIIRSLSSSSIENSCKKTRA). A helical transmembrane segment spans residues 311–333 (LFLAVVVLCVFIICFGPTNVLFL). Residues 334–345 (THYLQEANEFLY) lie on the Extracellular side of the membrane. Residues 346–369 (FAYILSACVGSVSCCLDPLIYYYA) traverse the membrane as a helical segment. The Cytoplasmic segment spans residues 370–420 (SSQCQRYLYSLLCCRKVSEPGSSTGQLMSTAMKNDNCSTNAKSSIYKKLLA).

This sequence belongs to the G-protein coupled receptor 1 family. Post-translationally, proteolytic cleavage generates a new N-terminus that functions as a tethered ligand.

The protein resides in the cell membrane. High affinity receptor that binds the activated thrombin, leading to calcium release from intracellular stores. The thrombin-activated receptor signaling pathway is mediated through PTX-insensitive G proteins, activation of phospholipase C resulting in the production of 1D-myo-inositol 1,4,5-trisphosphate (InsP3) which binds to InsP3 receptors causing calcium release from the stores. This chain is Proteinase-activated receptor 1, found in Xenopus laevis (African clawed frog).